A 193-amino-acid chain; its full sequence is Crossover junction endodeoxyribonuclease RuvC (193 aa).

Active-site residues include D7, E68, and D141. Mg(2+) contacts are provided by D7, E68, and D141.

It belongs to the RuvC family. In terms of assembly, homodimer which binds Holliday junction (HJ) DNA. The HJ becomes 2-fold symmetrical on binding to RuvC with unstacked arms; it has a different conformation from HJ DNA in complex with RuvA. In the full resolvosome a probable DNA-RuvA(4)-RuvB(12)-RuvC(2) complex forms which resolves the HJ. Mg(2+) serves as cofactor.

The protein localises to the cytoplasm. It catalyses the reaction Endonucleolytic cleavage at a junction such as a reciprocal single-stranded crossover between two homologous DNA duplexes (Holliday junction).. The RuvA-RuvB-RuvC complex processes Holliday junction (HJ) DNA during genetic recombination and DNA repair. Endonuclease that resolves HJ intermediates. Cleaves cruciform DNA by making single-stranded nicks across the HJ at symmetrical positions within the homologous arms, yielding a 5'-phosphate and a 3'-hydroxyl group; requires a central core of homology in the junction. The consensus cleavage sequence is 5'-(A/T)TT(C/G)-3'. Cleavage occurs on the 3'-side of the TT dinucleotide at the point of strand exchange. HJ branch migration catalyzed by RuvA-RuvB allows RuvC to scan DNA until it finds its consensus sequence, where it cleaves and resolves the cruciform DNA. This is Crossover junction endodeoxyribonuclease RuvC from Bifidobacterium adolescentis (strain ATCC 15703 / DSM 20083 / NCTC 11814 / E194a).